A 171-amino-acid chain; its full sequence is Peptide methionine sulfoxide reductase MsrA (171 aa).

Cys12 is an active-site residue.

The protein belongs to the MsrA Met sulfoxide reductase family.

It catalyses the reaction L-methionyl-[protein] + [thioredoxin]-disulfide + H2O = L-methionyl-(S)-S-oxide-[protein] + [thioredoxin]-dithiol. The catalysed reaction is [thioredoxin]-disulfide + L-methionine + H2O = L-methionine (S)-S-oxide + [thioredoxin]-dithiol. In terms of biological role, has an important function as a repair enzyme for proteins that have been inactivated by oxidation. Catalyzes the reversible oxidation-reduction of methionine sulfoxide in proteins to methionine. This is Peptide methionine sulfoxide reductase MsrA from Leuconostoc mesenteroides subsp. mesenteroides (strain ATCC 8293 / DSM 20343 / BCRC 11652 / CCM 1803 / JCM 6124 / NCDO 523 / NBRC 100496 / NCIMB 8023 / NCTC 12954 / NRRL B-1118 / 37Y).